The following is a 223-amino-acid chain: Glycoprotein 42 (223 aa).

Residues 1–8 are Intravirion-facing; it reads MVSFKQVR. Residues 9 to 29 traverse the membrane as a helical segment; sequence VPLFTAIALVIVLLLAYFLPP. At 30–223 the chain is on the virion surface side; it reads RVRGGGRVAA…CLCVSQRSNS (194 aa). Intrachain disulfides connect cysteine 99/cysteine 138, cysteine 102/cysteine 115, cysteine 128/cysteine 214, cysteine 132/cysteine 216, and cysteine 192/cysteine 208. In terms of domain architecture, C-type lectin spans 111–217; it reads YKGCCFYFTK…CSFLKPCLCV (107 aa).

It belongs to the epstein barr virus gp42 family. As to quaternary structure, forms a complex with gp25 and gp85 via its N-terminus; this complex is used for invasion of B-lymphocytes. Interacts with human HLA-DRA and HLA-DRB1.

The protein resides in the virion membrane. Its subcellular location is the host membrane. Functionally, plays a role in virion attachment to host B-lymphocytes, through binding to leukocyte antigen (HLA) class II and subsequently participates in fusion of the virion with host membranes. May act as a tropism switch that directs fusion with B-lymphocytes and inhibits fusion with epithelial cells. Additionally, hampers T-cell recognition via HLA class II molecules through steric hindrance of T-cell receptor-class II-peptide interaction. In terms of biological role, soluble gp42 inhibits HLA class II-restricted antigen presentation to T-cells through binding to immature and mature HLA class II complexes. The polypeptide is Glycoprotein 42 (Epstein-Barr virus (strain B95-8) (HHV-4)).